A 372-amino-acid chain; its full sequence is Chaperone protein DnaJ (372 aa).

The 66-residue stretch at 5-70 (DYYEVLGVAK…DKRAAYDQFG (66 aa)) folds into the J domain. The CR-type zinc-finger motif lies at 133-211 (GTETKIRIPT…CHGEGRVKKH (79 aa)). 8 residues coordinate Zn(2+): cysteine 146, cysteine 149, cysteine 163, cysteine 166, cysteine 185, cysteine 188, cysteine 199, and cysteine 202. 4 CXXCXGXG motif repeats span residues 146–153 (CGTCHGSG), 163–170 (CSACGGHG), 185–192 (CPRCGGTG), and 199–206 (CPSCHGEG).

The protein belongs to the DnaJ family. In terms of assembly, homodimer. The cofactor is Zn(2+).

It is found in the cytoplasm. Its function is as follows. Participates actively in the response to hyperosmotic and heat shock by preventing the aggregation of stress-denatured proteins and by disaggregating proteins, also in an autonomous, DnaK-independent fashion. Unfolded proteins bind initially to DnaJ; upon interaction with the DnaJ-bound protein, DnaK hydrolyzes its bound ATP, resulting in the formation of a stable complex. GrpE releases ADP from DnaK; ATP binding to DnaK triggers the release of the substrate protein, thus completing the reaction cycle. Several rounds of ATP-dependent interactions between DnaJ, DnaK and GrpE are required for fully efficient folding. Also involved, together with DnaK and GrpE, in the DNA replication of plasmids through activation of initiation proteins. The protein is Chaperone protein DnaJ of Thiobacillus denitrificans (strain ATCC 25259 / T1).